Consider the following 372-residue polypeptide: Bifunctional enzyme IspD/IspF (372 aa).

Residues 1 to 210 (MLDLSLIMLG…LNLNSPSNDI (210 aa)) are 2-C-methyl-D-erythritol 4-phosphate cytidylyltransferase. Residues 211 to 372 (FCGNGFDVHA…LKYFNWRNVL (162 aa)) form a 2-C-methyl-D-erythritol 2,4-cyclodiphosphate synthase region. Residues Asp217 and His219 each coordinate a divalent metal cation. Residues 217-219 (DVH) and 243-244 (HS) each bind 4-CDP-2-C-methyl-D-erythritol 2-phosphate. His251 is an a divalent metal cation binding site. Residues 265–267 (DIG), 270–274 (YPDND), 341–344 (TTTE), Phe348, and Arg351 each bind 4-CDP-2-C-methyl-D-erythritol 2-phosphate.

It in the N-terminal section; belongs to the IspD/TarI cytidylyltransferase family. IspD subfamily. In the C-terminal section; belongs to the IspF family. Requires a divalent metal cation as cofactor.

The enzyme catalyses 2-C-methyl-D-erythritol 4-phosphate + CTP + H(+) = 4-CDP-2-C-methyl-D-erythritol + diphosphate. It carries out the reaction 4-CDP-2-C-methyl-D-erythritol 2-phosphate = 2-C-methyl-D-erythritol 2,4-cyclic diphosphate + CMP. It participates in isoprenoid biosynthesis; isopentenyl diphosphate biosynthesis via DXP pathway; isopentenyl diphosphate from 1-deoxy-D-xylulose 5-phosphate: step 2/6. Its pathway is isoprenoid biosynthesis; isopentenyl diphosphate biosynthesis via DXP pathway; isopentenyl diphosphate from 1-deoxy-D-xylulose 5-phosphate: step 4/6. In terms of biological role, bifunctional enzyme that catalyzes the formation of 4-diphosphocytidyl-2-C-methyl-D-erythritol from CTP and 2-C-methyl-D-erythritol 4-phosphate (MEP) (IspD), and catalyzes the conversion of 4-diphosphocytidyl-2-C-methyl-D-erythritol 2-phosphate (CDP-ME2P) to 2-C-methyl-D-erythritol 2,4-cyclodiphosphate (ME-CPP) with a corresponding release of cytidine 5-monophosphate (CMP) (IspF). The polypeptide is Bifunctional enzyme IspD/IspF (Campylobacter fetus subsp. fetus (strain 82-40)).